A 495-amino-acid polypeptide reads, in one-letter code: Probable cytosol aminopeptidase (495 aa).

K267 and D272 together coordinate Mn(2+). The active site involves K279. Mn(2+) contacts are provided by D290, D349, and E351. R353 is an active-site residue.

It belongs to the peptidase M17 family. Mn(2+) is required as a cofactor.

Its subcellular location is the cytoplasm. It catalyses the reaction Release of an N-terminal amino acid, Xaa-|-Yaa-, in which Xaa is preferably Leu, but may be other amino acids including Pro although not Arg or Lys, and Yaa may be Pro. Amino acid amides and methyl esters are also readily hydrolyzed, but rates on arylamides are exceedingly low.. The catalysed reaction is Release of an N-terminal amino acid, preferentially leucine, but not glutamic or aspartic acids.. Presumably involved in the processing and regular turnover of intracellular proteins. Catalyzes the removal of unsubstituted N-terminal amino acids from various peptides. The protein is Probable cytosol aminopeptidase of Histophilus somni (strain 2336) (Haemophilus somnus).